Here is a 74-residue protein sequence, read N- to C-terminus: Small ribosomal subunit protein bS18 (74 aa).

This sequence belongs to the bacterial ribosomal protein bS18 family. Part of the 30S ribosomal subunit. Forms a tight heterodimer with protein bS6.

Its function is as follows. Binds as a heterodimer with protein bS6 to the central domain of the 16S rRNA, where it helps stabilize the platform of the 30S subunit. The chain is Small ribosomal subunit protein bS18 from Gloeobacter violaceus (strain ATCC 29082 / PCC 7421).